The sequence spans 475 residues: Transmembrane protein 44 (475 aa).

Topologically, residues 1–29 (MGEAPSPAPALWDWDYLDRCFARHRVCIS) are extracellular. A helical membrane pass occupies residues 30-50 (FGLWICASSCWIAAHALLLYL). The Cytoplasmic segment spans residues 51-61 (RCAQKPRQDQS). The helical transmembrane segment at 62–82 (ALCAACCLLTSLCDTVGALLA) threads the bilayer. Residues 83–88 (RQLTIQ) lie on the Extracellular side of the membrane. Residues 89–109 (VFTGAYLAAIDLVNFMFILFP) traverse the membrane as a helical segment. Residues 110 to 135 (VCGSKFKSNSDREARERKRRRQLRAS) lie on the Cytoplasmic side of the membrane. The helical transmembrane segment at 136–156 (VFALALPLSLGPCWALWVAVP) threads the bilayer. Over 157 to 179 (KASATIRGPQRRLLASLLQENTE) the chain is Extracellular. The chain crosses the membrane as a helical span at residues 180 to 200 (ILGYLLGSVAAFGSWASRIPP). Residues 201–259 (LSRIAPPPTLGITTQHEIWRGQMSKPSQSPSRSPSGHWRAAAQRQVLGTEMCRGKTFPS) are Cytoplasmic-facing. Residues 260–280 (IHLWTRLLSALAGLLYASAIV) traverse the membrane as a helical segment. Residues 281 to 294 (AHDQHPEYLLRATP) are Extracellular-facing. A helical transmembrane segment spans residues 295 to 315 (WFLTSLGRAALDLAIIFLSCV). At 316–475 (MKSKMRQALG…VRTAHLSDDD (160 aa)) the chain is on the cytoplasmic side. The tract at residues 390–475 (SATRLPGDGQ…VRTAHLSDDD (86 aa)) is disordered. Residues 424–436 (SSGSSSEVSSINS) are compositionally biased toward low complexity. Basic and acidic residues predominate over residues 464-475 (DSVRTAHLSDDD). Phosphoserine is present on Ser-465.

It localises to the membrane. The polypeptide is Transmembrane protein 44 (TMEM44) (Homo sapiens (Human)).